The chain runs to 562 residues: MOB kinase activator-like 2 (562 aa).

The tract at residues 30 to 50 is disordered; that stretch reads KSGSVQGTTATATATGPPSPP. Low complexity predominate over residues 31-45; the sequence is SGSVQGTTATATATG. 4 residues coordinate Zn(2+): cysteine 170, cysteine 175, histidine 250, and histidine 255. 3 disordered regions span residues 304–378, 468–523, and 538–562; these read DDTS…TASA, NFSN…STTV, and GASA…SSTA. Low complexity-rich tracts occupy residues 305-349, 357-378, and 471-481; these read DTSG…NSTS, NSQS…TASA, and NNNNNNHNLNH. Basic residues predominate over residues 482–514; it reads LNHHHHHHHHQHHHQHHPHGHHGHQGHQGHQGH. Positions 547-562 are enriched in low complexity; the sequence is AVSAATGGATSASSTA.

This sequence belongs to the MOB1/phocein family. Interacts with and activates trc, also interacts with wts.

The protein resides in the cytoplasm. Its subcellular location is the nucleus. Its function is as follows. Required for the normal morphogenesis of a variety of polarized outgrowths including epidermal hairs, bristles, arista laterals, and dendrites. This chain is MOB kinase activator-like 2, found in Drosophila pseudoobscura pseudoobscura (Fruit fly).